Consider the following 315-residue polypeptide: Acetyl-coenzyme A carboxylase carboxyl transferase subunit alpha (315 aa).

The region spanning 39–293 (RLQDKSSTLT…RADLIEQLDM (255 aa)) is the CoA carboxyltransferase C-terminal domain.

It belongs to the AccA family. Acetyl-CoA carboxylase is a heterohexamer composed of biotin carboxyl carrier protein (AccB), biotin carboxylase (AccC) and two subunits each of ACCase subunit alpha (AccA) and ACCase subunit beta (AccD).

The protein localises to the cytoplasm. It carries out the reaction N(6)-carboxybiotinyl-L-lysyl-[protein] + acetyl-CoA = N(6)-biotinyl-L-lysyl-[protein] + malonyl-CoA. It participates in lipid metabolism; malonyl-CoA biosynthesis; malonyl-CoA from acetyl-CoA: step 1/1. Its function is as follows. Component of the acetyl coenzyme A carboxylase (ACC) complex. First, biotin carboxylase catalyzes the carboxylation of biotin on its carrier protein (BCCP) and then the CO(2) group is transferred by the carboxyltransferase to acetyl-CoA to form malonyl-CoA. The polypeptide is Acetyl-coenzyme A carboxylase carboxyl transferase subunit alpha (Pseudomonas entomophila (strain L48)).